A 243-amino-acid chain; its full sequence is MALYTIGEVALLCDINPVTLRAWQRRYGLLKPQRTDGGHRLFNDADIDRIREIKRWIDNGVQVSKVKVLLSSDSSEQPNGWREQQEILLHYLQSSNLHSLRLWVKERGQDYPAQTLTTNLFVPLRRRLQCQQPALQALLGILDGILINYIALCLASARKKQGKDALVIGWNIHDTTRLWLEGWVASQQGWRIDVLAHSLSQFRPELFDGKTLLVWCGENQTLAQQQQLLAWRAQGRDIHPLGV.

The HTH merR-type domain maps to 3–72; the sequence is LYTIGEVALL…VSKVKVLLSS (70 aa). A DNA-binding region (H-T-H motif) is located at residues 6–25; that stretch reads IGEVALLCDINPVTLRAWQR.

Transcriptional activator of csgD, which is required for production of the curli (AgF). This Salmonella typhimurium (strain SL1344) protein is HTH-type transcriptional regulator MlrA.